Consider the following 1420-residue polypeptide: Protein CFT1 (1420 aa).

The span at 161-182 (DEDEEEEEEEDEEDEDEGEENI) shows a compositional bias: acidic residues. 3 disordered regions span residues 161–210 (DEDE…TTNQ), 435–488 (QVRY…QKTI), and 722–760 (NTSS…PPPK). 2 stretches are compositionally biased toward basic and acidic residues: residues 183–204 (DDTK…EDKN) and 437–461 (RYRD…KEDN). Residues 462–483 (KDDDDNDDDDEDDLYKEEEEEE) show a composition bias toward acidic residues.

The protein belongs to the CFT1 family.

It localises to the nucleus. In terms of biological role, RNA-binding component of the cleavage and polyadenylation factor (CPF) complex, which plays a key role in polyadenylation-dependent pre-mRNA 3'-end formation and cooperates with cleavage factors including the CFIA complex and NAB4/CFIB. Involved in poly(A) site recognition. May be involved in coupling transcription termination and mRNA 3'-end formation. The sequence is that of Protein CFT1 (CFT1) from Candida albicans (strain SC5314 / ATCC MYA-2876) (Yeast).